A 552-amino-acid polypeptide reads, in one-letter code: Putative transport protein YPTS_4123 (552 aa).

6 helical membrane-spanning segments follow: residues 1-21, 26-46, 65-85, 96-116, 119-139, and 158-178; these read MSAI…GLWI, IYGV…VGHF, FGLI…FFSS, FAIL…KLFA, LPII…LGAA, and MGYA…MWLI. 2 RCK C-terminal domains span residues 192 to 276 and 279 to 361; these read AFDS…VVGE and DVTL…IVGN. The next 6 membrane-spanning stretches (helical) occupy residues 371-391, 393-413, 439-459, 464-484, 493-513, and 530-550; these read MLPV…PLFV, GFPA…ALIL, IVLF…NTLV, LAWI…VGIL, YLTL…LAFA, and VYPL…VLFW.

It belongs to the AAE transporter (TC 2.A.81) family. YidE subfamily.

It localises to the cell membrane. This chain is Putative transport protein YPTS_4123, found in Yersinia pseudotuberculosis serotype IB (strain PB1/+).